We begin with the raw amino-acid sequence, 526 residues long: MWSSSQASTRGVIEVGRVEAGPSHFPKRPAPRNSSRVNLSRTYAIKSCSVSSRTGLCLGQCYHKKSSACKCKLGWSSQPLSSLRHHLRVHSSASEAVLTSQSDFTKLLVGNEKIGVLLLNLGGPETLDDVQPFLFNLFADPDIIRLPRLFRFLQKPLAQFISVVRAPKSKEGYASIGGGSPLRQITDAQAEALRKALCDKDIPAKVYVGMRYWHPFTEEAIEQIKRDGITKLVVLPLYPQFSISTSGSSLRLLEGIFREDEYLVNMQHTVIPSWYQREGYIKAMATLIEKELRTFSEPQKVMIFFSAHGVPLAYVEEAGDPYKAEMEECVDLIMEELEKRGITNSCTLAYQSRVGPVEWLRPYTDETIIELGQKGVKSLLAVPISFVSEHIETLEEIDVEYKELALESGIKHWGRVPALGCEPTFITDLADAVIESLPYVGAMAVSNLEARQPLVPLGSVEELLAAYDSKRDELPPPVTVWEWGWTKSAETWNGRAAMLAVLALLVLEVTTGEGFLHQWGILPLFH.

The protein belongs to the ferrochelatase family.

The protein resides in the plastid. The protein localises to the chloroplast. It carries out the reaction heme b + 2 H(+) = protoporphyrin IX + Fe(2+). Its pathway is porphyrin-containing compound metabolism; protoheme biosynthesis; protoheme from protoporphyrin-IX: step 1/1. Its function is as follows. Catalyzes the ferrous insertion into protoporphyrin IX. The protein is Ferrochelatase-2, chloroplastic of Oryza sativa subsp. japonica (Rice).